The primary structure comprises 329 residues: Arylacetonitrilase (329 aa).

In terms of domain architecture, CN hydrolase spans 6–279 (VRVAVTQAEP…EGIVYANLDM (274 aa)). E46 serves as the catalytic Proton acceptor. The active site involves K126. Catalysis depends on C161, which acts as the Nucleophile.

Belongs to the carbon-nitrogen hydrolase superfamily. Nitrilase family.

It catalyses the reaction a nitrile + 2 H2O = a carboxylate + NH4(+). The catalysed reaction is 4-chlorophenylacetonitrile + 2 H2O = 4-chlorophenylacetate + NH4(+). Nitrilase that hydrolyzes preferentially phenylacetonitrile and heteroaromatic nitriles, but has significantly lower activity for (R,S)-mandelonitrile. Also acts on dinitriles like phenylenediacetonitriles (PDAs) 1,2-PDA, 1,3-PDA, and 1,4-PDA, and cyanophenyl acetonitriles (CPAs) 2-CPA and 4-CPA. This Hypocrea virens (strain Gv29-8 / FGSC 10586) (Gliocladium virens) protein is Arylacetonitrilase.